The primary structure comprises 460 residues: tRNA modification GTPase MnmE (460 aa).

3 residues coordinate (6S)-5-formyl-5,6,7,8-tetrahydrofolate: R29, E86, and K126. Residues 222–383 (GMRVVIAGRP…LAEHLKECMG (162 aa)) form the TrmE-type G domain. N232 is a K(+) binding site. GTP is bound by residues 232–237 (NAGKSS), 251–257 (TAIAGTT), 276–279 (DTAG), and 341–344 (NKAD). A Mg(2+)-binding site is contributed by S236. Residues T251, I253, and T256 each contribute to the K(+) site. Residue T257 coordinates Mg(2+). Residue K460 participates in (6S)-5-formyl-5,6,7,8-tetrahydrofolate binding.

Belongs to the TRAFAC class TrmE-Era-EngA-EngB-Septin-like GTPase superfamily. TrmE GTPase family. As to quaternary structure, homodimer. Heterotetramer of two MnmE and two MnmG subunits. K(+) is required as a cofactor.

The protein resides in the cytoplasm. Its function is as follows. Exhibits a very high intrinsic GTPase hydrolysis rate. Involved in the addition of a carboxymethylaminomethyl (cmnm) group at the wobble position (U34) of certain tRNAs, forming tRNA-cmnm(5)s(2)U34. The polypeptide is tRNA modification GTPase MnmE (Pseudoalteromonas atlantica (strain T6c / ATCC BAA-1087)).